Consider the following 132-residue polypeptide: Female-specific protein 800 (132 aa).

In terms of biological role, FS800 is likely to have some function in the production or maintenance of the schistosome egg. It may have a function unrelated to eggshell formation. This Schistosoma mansoni (Blood fluke) protein is Female-specific protein 800.